A 145-amino-acid polypeptide reads, in one-letter code: Holo-[acyl-carrier-protein] synthase (145 aa).

Mg(2+)-binding residues include D8 and E59.

Belongs to the P-Pant transferase superfamily. AcpS family. Mg(2+) is required as a cofactor.

It localises to the cytoplasm. The catalysed reaction is apo-[ACP] + CoA = holo-[ACP] + adenosine 3',5'-bisphosphate + H(+). Transfers the 4'-phosphopantetheine moiety from coenzyme A to a Ser of acyl-carrier-protein. This chain is Holo-[acyl-carrier-protein] synthase, found in Granulibacter bethesdensis (strain ATCC BAA-1260 / CGDNIH1).